An 85-amino-acid chain; its full sequence is UPF0386 protein Plav_1374 (85 aa).

Belongs to the UPF0386 family.

This is UPF0386 protein Plav_1374 from Parvibaculum lavamentivorans (strain DS-1 / DSM 13023 / NCIMB 13966).